The chain runs to 261 residues: uncharacterized protein (261 aa).

Residues 20-34 are compositionally biased toward polar residues; sequence TMSTPFLESDNSNTQ. The segment at 20–55 is disordered; it reads TMSTPFLESDNSNTQSISGRIGSNNNSNSKNSGGIG. A compositionally biased stretch (low complexity) spans 35 to 51; the sequence is SISGRIGSNNNSNSKNS. The next 3 membrane-spanning stretches (helical) occupy residues 113–133, 183–200, and 204–226; these read LFSG…ILLL, LIFW…ILFF, and IISL…MANV.

This sequence belongs to the TVP23 family.

Its subcellular location is the membrane. This is an uncharacterized protein from Dictyostelium discoideum (Social amoeba).